The following is a 404-amino-acid chain: Propionate kinase (404 aa).

This sequence belongs to the acetokinase family. PduW subfamily.

It is found in the cytoplasm. The catalysed reaction is propanoate + ATP = propanoyl phosphate + ADP. It functions in the pathway polyol metabolism; 1,2-propanediol degradation. In terms of biological role, works with phosphate acetyltransferase (pta) to capture exogenous propionate and regenerate propionyl-CoA during degradation of 1,2-propanediol (1,2-PD). The chain is Propionate kinase from Klebsiella pneumoniae subsp. pneumoniae (strain ATCC 700721 / MGH 78578).